The following is a 95-amino-acid chain: Selenoprotein K (95 aa).

A helical membrane pass occupies residues L20 to L42. Residues K47–R95 are disordered. Residue U93 is a non-standard amino acid, selenocysteine.

The protein belongs to the selenoprotein K family. In terms of assembly, interacts with DERL1, DERL2, DERL3 and SELENOS. The SELENOK-SELENOS complex interacts with VCP. Interacts with ZDHHC6. In terms of processing, cleaved by CAPN2/m-calpain in resting macrophages but not in activated macrophages. Macrophage activation up-regulates expression of the calpain inhibitor CAST/calpastatin, resulting in inhibition of CAPN2 activity. Post-translationally, truncated SELENOK proteins produced by failed UGA/Sec decoding are ubiquitinated by the CRL2(KLHDC2) complex, which recognizes the diglycine (Gly-Gly) at the C-terminus of truncated SELENOK proteins.

It localises to the endoplasmic reticulum membrane. The protein resides in the cell membrane. Required for Ca(2+) flux in immune cells and plays a role in T-cell proliferation and in T-cell and neutrophil migration. Involved in endoplasmic reticulum-associated degradation (ERAD) of soluble glycosylated proteins. Required for palmitoylation and cell surface expression of CD36 and involved in macrophage uptake of low-density lipoprotein and in foam cell formation. Together with ZDHHC6, required for palmitoylation of ITPR1 in immune cells, leading to regulate ITPR1 stability and function. Plays a role in protection of cells from ER stress-induced apoptosis. Protects cells from oxidative stress when overexpressed in cardiomyocytes. This chain is Selenoprotein K, found in Bos taurus (Bovine).